Reading from the N-terminus, the 498-residue chain is Myocyte-specific enhancer factor 2A (498 aa).

The MADS-box domain occupies 3-57; that stretch reads RKKIQITRIMDERNRQVTFTKRKFGLMKKAYELSVLCDCEIALIIFNSSNKLFQY. A DNA-binding region (mef2-type) is located at residues 58-86; it reads ASTDMDKVLLKYTEYNEPHESRTNSDIVE. Ser-59 bears the Phosphoserine; by CK2 mark. Residues Ser-98 and Ser-108 each carry the phosphoserine modification. Residue Ser-108 is modified to Phosphothreonine. The segment at 172-220 is disordered; the sequence is LADSSMLSPPPATLHRNVSPGAPQRPPSTGSASGMLSTTDLTVPNGAGN. A compositionally biased stretch (polar residues) spans 198–220; the sequence is PSTGSASGMLSTTDLTVPNGAGN. At Ser-233 the chain carries Phosphoserine. The disordered stretch occupies residues 240 to 268; the sequence is TGANSLGKVMPTKSPPPPGGGSLGMNSRK. Lys-247 is modified (N6-acetyllysine). Ser-253 is subject to Phosphoserine. The segment at 264–281 is required for interaction with MAPKs; that stretch reads MNSRKPDLRVVIPPSSKG. Positions 287-294 are beta domain; the sequence is SEEEELEL. Phosphothreonine; by MAPK7 is present on residues Thr-310 and Thr-317. Thr-310 bears the Phosphothreonine; by NLK mark. Phosphoserine; by MAPK7 is present on Ser-353. The span at 388 to 400 shows a compositional bias: polar residues; the sequence is SNLSINTNQNINI. The tract at residues 388–498 is disordered; it reads SNLSINTNQN…KRMRMDTWVT (111 aa). The residue at position 401 (Lys-401) is an N6-acetyllysine; alternate. Residue Lys-401 forms a Glycyl lysine isopeptide (Lys-Gly) (interchain with G-Cter in SUMO); alternate linkage. Ser-406 bears the Phosphoserine mark. Thr-413 carries the phosphothreonine modification. The segment covering 426-436 has biased composition (pro residues); it reads QQPPPQPPQPQ. The residue at position 444 (Ser-444) is a Phosphoserine. A compositionally biased stretch (low complexity) spans 444–457; sequence SPVDSLSSSSSSYD. Composition is skewed to basic and acidic residues over residues 458–468 and 479–498; these read GSDREDPRGDF and NTED…TWVT.

This sequence belongs to the MEF2 family. In terms of assembly, binds DNA as a homo- or heterodimer. Dimerizes with MEF2D. Interacts with HDAC7. Interacts with PIAS1; the interaction enhances sumoylation. Interacts with HDAC4, HDAC9 and SLC2A4RG. Interacts (via the N-terminal) with MAPK7; the interaction results in the phosphorylation and transcriptional activity of MEF2A. Post-translationally, constitutive phosphorylation on Ser-406 promotes Lys-401 sumoylation thus preventing acetylation at this site. Dephosphorylation on Ser-406 by PPP3CA upon neuron depolarization promotes a switch from sumoylation to acetylation on residue Lys-403 leading to inhibition of dendrite claw differentiation. Phosphorylation on Thr-312 and Thr-319 are the main sites involved in p38 MAPK signaling and activate transcription. Phosphorylated on these sites by MAPK14/p38alpha and MAPK11/p38beta, but not by MAPK13/p38delta nor by MAPK12/p38gamma. Phosphorylation on Ser-408 by CDK5 induced by neurotoxicity inhibits MEF2A transcriptional activation leading to apoptosis of cortical neurons. Phosphorylation on Thr-312, Thr-319 and Ser-355 can be induced by EGF. Isoform 3 is phosphorylated on Ser-98 and Thr-108. Sumoylation on Lys-401 is enhanced by PIAS1 and represses transcriptional activity. Phosphorylation on Ser-406 is required for sumoylation. Has no effect on nuclear location nor on DNA binding. Sumoylated with SUMO1 and, to a lesser extent with SUMO2 and SUMO3. PIASx facilitates sumoylation in postsynaptic dendrites in the cerebellar cortex and promotes their morphogenesis. In terms of processing, acetylation on Lys-401 activates transcriptional activity. Acetylated by p300 on several sites in diffentiating myocytes. Acetylation on Lys-4 increases DNA binding and transactivation. Hyperacetylation by p300 leads to enhanced cardiac myocyte growth and heart failure. Post-translationally, proteolytically cleaved in cerebellar granule neurons on several sites by caspase 3 and caspase 7 following neurotoxicity. Preferentially cleaves the CDK5-mediated hyperphosphorylated form which leads to neuron apoptosis and transcriptional inactivation. As to expression, widely expressed though mainly restricted to skeletal and cardiac muscle, brain, neurons and lymphocytes. Differentially expressed depending on if isoforms contain the beta domain or not, with the total expression of the beta domain-lacking isoforms vastly exceeding that of the beta domain-containing isoforms. Isoforms containing the beta domain are expressed primarily in skeletal and cardiac muscle and in brain. Also present in lung and testis. Splicing to include the beta domain is induced in differentiating myocytes. Isoforms lacking the beta domain are expressed less abundantly in skeletal muscle, brain and lymphocytes, and are uniquely found in ovary, liver, spleen and kidney. In embryos, the beta domain-containing and beta domain-lacking isoforms are equally expressed. Also expressed cerebellar granule neurons and other regions of the CNS. Highest levels in the olfactory bulb, cortex, hippocampus, thalamus and cerebellum.

It localises to the nucleus. Its function is as follows. Transcriptional activator which binds specifically to the MEF2 element, 5'-YTA[AT](4)TAR-3', found in numerous muscle-specific genes. Also involved in the activation of numerous growth factor- and stress-induced genes. Mediates cellular functions not only in skeletal and cardiac muscle development, but also in neuronal differentiation and survival. Plays diverse roles in the control of cell growth, survival and apoptosis via p38 MAPK signaling in muscle-specific and/or growth factor-related transcription. In cerebellar granule neurons, phosphorylated and sumoylated MEF2A represses transcription of NUR77 promoting synaptic differentiation. Associates with chromatin to the ZNF16 promoter. The protein is Myocyte-specific enhancer factor 2A (Mef2a) of Mus musculus (Mouse).